A 320-amino-acid chain; its full sequence is Malate dehydrogenase (320 aa).

Residues Gly-10–Gly-15 and Asp-34 contribute to the NAD(+) site. The substrate site is built by Arg-83 and Arg-89. NAD(+) contacts are provided by residues Asn-96 and Ile-119–Asn-121. Positions 121 and 152 each coordinate substrate. Residue His-176 is the Proton acceptor of the active site.

It belongs to the LDH/MDH superfamily. MDH type 3 family.

The enzyme catalyses (S)-malate + NAD(+) = oxaloacetate + NADH + H(+). Functionally, catalyzes the reversible oxidation of malate to oxaloacetate. The chain is Malate dehydrogenase from Bartonella tribocorum (strain CIP 105476 / IBS 506).